The following is a 466-amino-acid chain: Adenosylhomocysteinase (466 aa).

Residues Thr-57, Asp-132, and Glu-192 each contribute to the substrate site. 193 to 195 (TTT) contributes to the NAD(+) binding site. Substrate-binding residues include Lys-222 and Asp-226. Residues Asn-227, 256-261 (GYGDVG), Glu-279, Asn-314, 335-337 (IGH), and Asn-380 contribute to the NAD(+) site.

This sequence belongs to the adenosylhomocysteinase family. NAD(+) serves as cofactor.

The protein localises to the cytoplasm. It carries out the reaction S-adenosyl-L-homocysteine + H2O = L-homocysteine + adenosine. It functions in the pathway amino-acid biosynthesis; L-homocysteine biosynthesis; L-homocysteine from S-adenosyl-L-homocysteine: step 1/1. Functionally, may play a key role in the regulation of the intracellular concentration of adenosylhomocysteine. This chain is Adenosylhomocysteinase, found in Brucella abortus (strain S19).